A 393-amino-acid chain; its full sequence is MKLHEYQAKMLFAQYGIPIPKGLVCTTPNEAKESIAVIGYGPWIVKCQVHAGGRGKSGGVRIVRSKEEIQEFAKQWFGKHLITEQTNHIGQPVSKILVEAAIDIAQELYLGCLVDRSNQCIKFIASIQGGIDIENIAKEKPHLLHQIILDPLIGPQLYQSRDLAFKIGLSSKKQINQFNKIFMGLATLFLEKDLVMAEINPLVITRLGDLICLDGKLHVDSNALFRQPELCKMLDPSQEDKCETYAKQHNLNYIALNGNIGCLVNGAGLAMSTIDMVKFYGGEPANFLDVGGRVTQEKVTKAFQIILSDKKVKVILVNIFGGIVCCDVIAKGIINARLESGINIPVIVRLEGNNAKQGIQHLVNSILNIRIATNLTTAAKQAVALVEGKQCLF.

The 237-residue stretch at 9–245 (KMLFAQYGIP…PSQEDKCETY (237 aa)) folds into the ATP-grasp domain. Residues Lys46, 53 to 55 (GRG), Glu99, Ile102, and Glu107 contribute to the ATP site. 2 residues coordinate Mg(2+): Asn200 and Asp214. Substrate-binding positions include Asn265 and 322–324 (GIV).

This sequence belongs to the succinate/malate CoA ligase beta subunit family. As to quaternary structure, heterotetramer of two alpha and two beta subunits. Mg(2+) serves as cofactor.

The catalysed reaction is succinate + ATP + CoA = succinyl-CoA + ADP + phosphate. It catalyses the reaction GTP + succinate + CoA = succinyl-CoA + GDP + phosphate. The protein operates within carbohydrate metabolism; tricarboxylic acid cycle; succinate from succinyl-CoA (ligase route): step 1/1. Succinyl-CoA synthetase functions in the citric acid cycle (TCA), coupling the hydrolysis of succinyl-CoA to the synthesis of either ATP or GTP and thus represents the only step of substrate-level phosphorylation in the TCA. The beta subunit provides nucleotide specificity of the enzyme and binds the substrate succinate, while the binding sites for coenzyme A and phosphate are found in the alpha subunit. The protein is Succinate--CoA ligase [ADP-forming] subunit beta of Baumannia cicadellinicola subsp. Homalodisca coagulata.